Here is a 421-residue protein sequence, read N- to C-terminus: UDP-N-acetylglucosamine 1-carboxyvinyltransferase (421 aa).

22–23 (KN) contacts phosphoenolpyruvate. Arg-93 provides a ligand contact to UDP-N-acetyl-alpha-D-glucosamine. The active-site Proton donor is Cys-117. At Cys-117 the chain carries 2-(S-cysteinyl)pyruvic acid O-phosphothioketal. Residues 122–126 (RPVDL), Asp-308, and Val-330 contribute to the UDP-N-acetyl-alpha-D-glucosamine site.

The protein belongs to the EPSP synthase family. MurA subfamily.

It is found in the cytoplasm. It carries out the reaction phosphoenolpyruvate + UDP-N-acetyl-alpha-D-glucosamine = UDP-N-acetyl-3-O-(1-carboxyvinyl)-alpha-D-glucosamine + phosphate. Its pathway is cell wall biogenesis; peptidoglycan biosynthesis. Functionally, cell wall formation. Adds enolpyruvyl to UDP-N-acetylglucosamine. The sequence is that of UDP-N-acetylglucosamine 1-carboxyvinyltransferase from Pseudomonas aeruginosa (strain LESB58).